The sequence spans 541 residues: Zinc finger protein 513 (541 aa).

Residues 1–118 (MPRRKQSHPQ…GEARGERPGP (118 aa)) are disordered. The segment covering 44 to 57 (LEFEEEEEEEEGDG) has biased composition (acidic residues). 2 positions are modified to phosphoserine: S85 and S96. Residues 103–115 (EPARGPGEARGER) are compositionally biased toward basic and acidic residues. 8 consecutive C2H2-type zinc fingers follow at residues 150 to 172 (YSCR…MQTH), 178 to 200 (FRCG…TRTH), 206 to 228 (YRCP…QRTH), 360 to 382 (FACS…MKTH), 388 to 410 (FRCA…QRVH), 416 to 438 (YKCP…GRIH), 444 to 466 (FRCS…MLRH), and 472 to 494 (FRCA…QKVH). Residues 492–541 (KVHGHGGAGGPGLSASEGWAPPHSPPSVLSSRGPPALGTAGSRAVHTDSS) form a disordered region.

This sequence belongs to the krueppel C2H2-type zinc-finger protein family. Binds DNA. Can associate with the proximal promoter regions of PAX6 and SP4, and their known targets including ARR3, RHO, OPN1MW2 and OPN1SW. In the retina, expressed in the outer and inner nuclear layers, and the ganglion cell layer.

The protein localises to the nucleus. Functionally, transcriptional regulator that plays a role in retinal development and maintenance. The sequence is that of Zinc finger protein 513 (ZNF513) from Homo sapiens (Human).